We begin with the raw amino-acid sequence, 230 residues long: uncharacterized protein (230 aa).

This is an uncharacterized protein from Aquifex aeolicus (strain VF5).